Reading from the N-terminus, the 380-residue chain is Phospho-N-acetylmuramoyl-pentapeptide-transferase (380 aa).

11 helical membrane-spanning segments follow: residues 26-46, 75-95, 98-118, 135-155, 160-180, 183-203, 222-242, 259-279, 283-303, 311-331, and 357-377; these read IVAA…LFIE, MGGA…ADLG, LVWA…WDDW, LVLQ…DWQP, GFPF…PFVP, LFSP…VVAT, IVSS…IAGF, LGVF…YNTY, VFMG…LAVL, AILH…VWSF, and KIIV…LMSL.

It belongs to the glycosyltransferase 4 family. MraY subfamily. Requires Mg(2+) as cofactor.

Its subcellular location is the cell inner membrane. The enzyme catalyses UDP-N-acetyl-alpha-D-muramoyl-L-alanyl-gamma-D-glutamyl-meso-2,6-diaminopimeloyl-D-alanyl-D-alanine + di-trans,octa-cis-undecaprenyl phosphate = di-trans,octa-cis-undecaprenyl diphospho-N-acetyl-alpha-D-muramoyl-L-alanyl-D-glutamyl-meso-2,6-diaminopimeloyl-D-alanyl-D-alanine + UMP. It participates in cell wall biogenesis; peptidoglycan biosynthesis. Functionally, catalyzes the initial step of the lipid cycle reactions in the biosynthesis of the cell wall peptidoglycan: transfers peptidoglycan precursor phospho-MurNAc-pentapeptide from UDP-MurNAc-pentapeptide onto the lipid carrier undecaprenyl phosphate, yielding undecaprenyl-pyrophosphoryl-MurNAc-pentapeptide, known as lipid I. This is Phospho-N-acetylmuramoyl-pentapeptide-transferase from Anaeromyxobacter sp. (strain Fw109-5).